A 354-amino-acid polypeptide reads, in one-letter code: MFDVEPIIADHKDVIHDVVFDYYGRRMATCSSDQTVKIWDEDGQGKWNVTSSWKAHSGSIWRVSWAHPEFGQVVATCSFDRTASVWEEVIGEKVSSTNTPTRRWVRRTTLVDSRTSVTDVEFAPKYLGLLLATASADGIIRIYEAPDIMNLSQWPVQHEISNKLPLSCLSWNTSTYMVTQLLAAGSDEAATPTGKVFLFAYSENSRKCVKIDTVNDITDPVTDVAFAPNAGRTFHMLAVASKDLYIVNLRGVTDATDISKLDIQTIKFSEHNCPVWRVCWNMLATMLISTGDDGCVRLWRMNYNRQWRCAAVLKAEGSGPTYEPAPPTPTLATTASATAKFYKKGTIGNQVPWH.

WD repeat units lie at residues 10–49 (DHKD…KWNV), 55–96 (AHSG…KVSS), 112–153 (DSRT…NLSQ), 161–209 (SNKL…RKCV), 216–259 (DITD…TDIS), and 270–309 (EHNC…QWRC).

Belongs to the WD repeat SEC13 family. In terms of assembly, probable component of the nuclear pore complex (NPC). Component of the GATOR complex consisting of mio, Nup44A/Seh1, Im11, Nplr3, Nplr2, Wdr24, Wdr59 and Sec13. Within the GATOR complex, probable component of the GATOR2 subcomplex which is likely composed of mio, Nup44A/Seh1, Wdr24, Wdr59 and Sec13. Interacts with mio. Interacts with Wdr24. The GATOR2 complex associates with unmet in the absence of S-adenosyl-L-methionine; the mio-Wdr24-Nup44A subcomplex is essential and sufficient for this interaction while Wdr59 and Sec13 are dispensable. This association acts as a nutrient sensor to inhibit mTORC1 signaling in the absence of methionine. In terms of tissue distribution, expressed in ovarian cysts.

It localises to the nucleus envelope. The protein resides in the lysosome. Its function is as follows. Probable component of the nuclear pore complex (NPC). Involved in maintaining the localization of another nucleoporin Mgtor to the nuclear envelope of early meiotic female germline cells. It is not involved in recruiting the nucleoporins Mgtor, Nup107, Nup153 and FG-containing nucleoporins to the NPC. An essential component of the GATOR subcomplex GATOR2 which functions as an activator of the amino acid-sensing branch of the mTORC1 signaling pathway. The two GATOR subcomplexes, GATOR1 and GATOR2, regulate the mTORC1 pathway in order to mediate metabolic homeostasis, female gametogenesis and the response to amino acid limitation and complete starvation. GATOR2 activates the mTORC1 signaling pathway through the inhibition of the GATOR1 subcomplex, controlling the switch to cell proliferation growth under nutrient replete conditions and growth during female oocyte development. This component is required for activating mTORC1 specifically in germline cells to promote cell growth and maintain the oocyte fate, probably influences the organization and/or function of microtubules within ovarian cysts, and promotes accumulation of another GATOR2 complex member mio in germline and somatic tissues. GATOR1 and GATOR2 act at different stages of oogenesis to regulate mTORC1 in order to control meiotic entry and promote oocyte growth and development. After exactly four mitotic cyst divisions, the GATOR1 complex members (Iml1, Nprl2 and Nprl3) down-regulate mTORC1 to slow cellular metabolism and promote the mitotic/meiotic transition. At later stages of oogenesis, the mio and Nup44A components of the GATOR2 complex inhibit GATOR1 and thus activate mTORC1 to promote meiotic progression, and drive oocyte growth and development. In addition to its role in the regulation of the mTORC1 complex, functions independently of mTORC1 to prevent the inappropriate accumulation of autolysosomes in germline tissues. This is Nucleoporin seh1 from Drosophila melanogaster (Fruit fly).